Reading from the N-terminus, the 305-residue chain is Formamidopyrimidine-DNA glycosylase (305 aa).

Catalysis depends on Pro-2, which acts as the Schiff-base intermediate with DNA. The Proton donor role is filled by Glu-3. The active-site Proton donor; for beta-elimination activity is the Lys-59. Residues His-92, Arg-111, and Arg-154 each contribute to the DNA site. An FPG-type zinc finger spans residues 239–273; that stretch reads QVFDRAGEPCPVCGTPIRKVAVAQRGTHFCPRCQP. The active-site Proton donor; for delta-elimination activity is the Arg-263. Residues 282 to 305 form a disordered region; that stretch reads PRRARPGRRGNSVRVAAEPPGTYE.

Belongs to the FPG family. As to quaternary structure, monomer. Zn(2+) is required as a cofactor.

The enzyme catalyses Hydrolysis of DNA containing ring-opened 7-methylguanine residues, releasing 2,6-diamino-4-hydroxy-5-(N-methyl)formamidopyrimidine.. It carries out the reaction 2'-deoxyribonucleotide-(2'-deoxyribose 5'-phosphate)-2'-deoxyribonucleotide-DNA = a 3'-end 2'-deoxyribonucleotide-(2,3-dehydro-2,3-deoxyribose 5'-phosphate)-DNA + a 5'-end 5'-phospho-2'-deoxyribonucleoside-DNA + H(+). Functionally, involved in base excision repair of DNA damaged by oxidation or by mutagenic agents. Acts as a DNA glycosylase that recognizes and removes damaged bases. Has a preference for oxidized purines, such as 7,8-dihydro-8-oxoguanine (8-oxoG). Has AP (apurinic/apyrimidinic) lyase activity and introduces nicks in the DNA strand. Cleaves the DNA backbone by beta-delta elimination to generate a single-strand break at the site of the removed base with both 3'- and 5'-phosphates. The protein is Formamidopyrimidine-DNA glycosylase of Symbiobacterium thermophilum (strain DSM 24528 / JCM 14929 / IAM 14863 / T).